A 222-amino-acid polypeptide reads, in one-letter code: uncharacterized protein (222 aa).

A disordered region spans residues 142 to 222; that stretch reads ARRGGCVHPP…LPDPPSAGHL (81 aa). Residues 160–169 show a composition bias toward low complexity; the sequence is QSRSISSRRA. The span at 182–196 shows a compositional bias: basic residues; that stretch reads PRRRPHRHRTRPQTR.

The protein belongs to the Rv1128c/1148c/1588c/1702c/1945/3466 family.

This is an uncharacterized protein from Mycobacterium tuberculosis (strain CDC 1551 / Oshkosh).